The chain runs to 500 residues: Probable glycine dehydrogenase (decarboxylating) subunit 2 (500 aa).

The tract at residues 1–25 (MLIFEHSRPGRRNYSQSPKAAEATD) is disordered. Lysine 263 carries the post-translational modification N6-(pyridoxal phosphate)lysine.

Belongs to the GcvP family. C-terminal subunit subfamily. The glycine cleavage system is composed of four proteins: P, T, L and H. In this organism, the P 'protein' is a heterodimer of two subunits. It depends on pyridoxal 5'-phosphate as a cofactor.

It carries out the reaction N(6)-[(R)-lipoyl]-L-lysyl-[glycine-cleavage complex H protein] + glycine + H(+) = N(6)-[(R)-S(8)-aminomethyldihydrolipoyl]-L-lysyl-[glycine-cleavage complex H protein] + CO2. Its function is as follows. The glycine cleavage system catalyzes the degradation of glycine. The P protein binds the alpha-amino group of glycine through its pyridoxal phosphate cofactor; CO(2) is released and the remaining methylamine moiety is then transferred to the lipoamide cofactor of the H protein. The protein is Probable glycine dehydrogenase (decarboxylating) subunit 2 of Nitrosospira multiformis (strain ATCC 25196 / NCIMB 11849 / C 71).